A 193-amino-acid chain; its full sequence is Dephospho-CoA kinase (193 aa).

The 189-residue stretch at 5–193 (IIGLTGGIAS…KKVERFCETI (189 aa)) folds into the DPCK domain. Residue 13–18 (ASGKST) coordinates ATP.

The protein belongs to the CoaE family.

It localises to the cytoplasm. The catalysed reaction is 3'-dephospho-CoA + ATP = ADP + CoA + H(+). Its pathway is cofactor biosynthesis; coenzyme A biosynthesis; CoA from (R)-pantothenate: step 5/5. Functionally, catalyzes the phosphorylation of the 3'-hydroxyl group of dephosphocoenzyme A to form coenzyme A. This Fusobacterium nucleatum subsp. nucleatum (strain ATCC 25586 / DSM 15643 / BCRC 10681 / CIP 101130 / JCM 8532 / KCTC 2640 / LMG 13131 / VPI 4355) protein is Dephospho-CoA kinase.